We begin with the raw amino-acid sequence, 2809 residues long: Fibrillin-3 (2809 aa).

Residues 1 to 31 form the signal peptide; sequence MTLEGLYLARGPLARLLLAWSALLCMAGGQG. Positions 32 to 48 are excised as a propeptide; it reads RWDGALEAAGPGRVRRR. The region spanning 147 to 179 is the EGF-like 1 domain; the sequence is GQPICDRGCHNGGRCIGPNRCACVYGFMGPQCE. Intrachain disulfides connect Cys151-Cys161, Cys155-Cys167, and Cys169-Cys178. A TB 1 domain is found at 185 to 237; that stretch reads GPCFGQVGPEGCQHQLTGLVCTKALCCATVGRAWGLPCELCPAQPHPCRRGFI. Positions 247-288 constitute an EGF-like 2; calcium-binding domain; sequence DVDECQAVPGLCQGGSCVNMVGSFHCRCPVGHRLSDSSAACE. Disulfide bonds link Cys251–Cys263, Cys258–Cys272, and Cys274–Cys287. One can recognise a TB 2 domain in the interval 293–346; that stretch reads GACFSVLFGGRCAGDLAGHYTRRQCCCDRGRCWAAGPVPELCPPRGSNEFQQLC. N-linked (GlcNAc...) asparagine glycosylation is present at Asn406. The region spanning 408-448 is the EGF-like 3 domain; sequence TIDICRHFTNLCLNGRCLPTPSSYRCECNVGYTQDVRGECI. 15 disulfides stabilise this stretch: Cys412-Cys424, Cys419-Cys433, Cys435-Cys447, Cys453-Cys463, Cys458-Cys472, Cys474-Cys487, Cys493-Cys505, Cys500-Cys514, Cys516-Cys529, Cys535-Cys546, Cys541-Cys555, Cys557-Cys570, Cys576-Cys587, Cys582-Cys596, and Cys598-Cys611. The region spanning 449-488 is the EGF-like 4; calcium-binding domain; the sequence is DVDECTSSPCHHGDCVNIPGTYHCRCYPGFQATPTRQACV. Residues 489–530 form the EGF-like 5; calcium-binding domain; the sequence is DVDECIVSGGLCHLGRCVNTEGSFQCVCNAGFELSPDGKNCV. Residues 531 to 571 enclose the EGF-like 6; calcium-binding domain; that stretch reads DHNECATSTMCVNGVCLNEDGSFSCLCKPGFLLAPGGHYCM. An EGF-like 7; calcium-binding domain is found at 572 to 612; that stretch reads DIDECQTPGICVNGHCTNTEGSFRCQCLGGLAVGTDGRVCV. In terms of domain architecture, TB 3 spans 618-670; the sequence is STCYGAIEKGSCARPFPGTVTKSECCCANPDHGFGEPCQLCPAKDSAEFQALC. One can recognise an EGF-like 8; calcium-binding domain in the interval 682–723; it reads DINECALDPEVCANGVCENLRGSYRCVCNLGYEAGASGKDCT. 9 disulfides stabilise this stretch: Cys686-Cys698, Cys693-Cys707, Cys709-Cys722, Cys728-Cys740, Cys735-Cys749, Cys751-Cys764, Cys770-Cys780, Cys775-Cys789, and Cys791-Cys804. Residues 724-765 enclose the EGF-like 9; calcium-binding domain; it reads DVDECALNSLLCDNGWCQNSPGSYSCSCPPGFHFWQDTEICK. The EGF-like 10; calcium-binding domain occupies 766–805; it reads DVDECLSSPCVSGVCRNLAGSYTCKCGPGSRLDPSGTFCL. In terms of domain architecture, TB 4 spans 810-861; sequence GTCWLKIQESRCEVNLQGASLRSECCATLGAAWGSPCERCEIDPACARGFAR. Residues 869–910 form the EGF-like 11; calcium-binding domain; sequence DVNECESFPGVCPNGRCVNTAGSFRCECPEGLMLDASGRLCV. Intrachain disulfides connect Cys873/Cys885, Cys880/Cys894, and Cys896/Cys909. In terms of domain architecture, TB 5 spans 915-966; sequence EPCFLRWDEDECGVTLPGKYRMDVCCCSIGAVWGVECEACPDPESLEFASLC. The EGF-like 12; calcium-binding domain maps to 986–1027; sequence DVNECKVFPGLCTHGTCRNTVGSFHCACAGGFALDAQERNCT. Disulfide bonds link Cys990–Cys1002, Cys997–Cys1011, Cys1013–Cys1026, Cys1032–Cys1044, Cys1039–Cys1053, Cys1055–Cys1069, Cys1075–Cys1087, Cys1082–Cys1096, Cys1098–Cys1111, Cys1117–Cys1129, Cys1124–Cys1138, Cys1140–Cys1153, Cys1159–Cys1170, Cys1166–Cys1179, Cys1181–Cys1194, Cys1200–Cys1212, Cys1207–Cys1221, Cys1223–Cys1236, Cys1242–Cys1254, Cys1249–Cys1263, Cys1265–Cys1278, Cys1284–Cys1297, Cys1291–Cys1306, Cys1308–Cys1319, Cys1325–Cys1338, Cys1332–Cys1347, Cys1349–Cys1360, Cys1366–Cys1378, Cys1373–Cys1387, Cys1389–Cys1402, Cys1408–Cys1419, Cys1414–Cys1428, Cys1430–Cys1443, Cys1449–Cys1460, Cys1455–Cys1469, and Cys1471–Cys1484. N-linked (GlcNAc...) asparagine glycosylation occurs at Asn1025. Residues 1028–1070 form the EGF-like 13; calcium-binding domain; it reads DIDECRISPDLCGQGTCVNTPGSFECECFPGYESGFMLMKNCM. The EGF-like 14; calcium-binding domain maps to 1071 to 1112; that stretch reads DVDECARDPLLCRGGTCTNTDGSYKCQCPPGHELTAKGTACE. One can recognise an EGF-like 15; calcium-binding domain in the interval 1113–1154; that stretch reads DIDECSLSDGLCPHGQCVNVIGAFQCSCHAGFQSTPDRQGCV. The 41-residue stretch at 1155 to 1195 folds into the EGF-like 16; calcium-binding domain; the sequence is DINECRVQNGGCDVHCINTEGSYRCSCGQGYSLMPDGRACA. In terms of domain architecture, EGF-like 17 spans 1196–1237; the sequence is DVDECEENPRVCDQGHCTNMPGGHRCLCYDGFMATPDMRTCV. The 42-residue stretch at 1238–1279 folds into the EGF-like 18; calcium-binding domain; sequence DVDECDLNPHICLHGDCENTKGSFVCHCQLGYMVRKGATGCS. In terms of domain architecture, EGF-like 19; calcium-binding spans 1280-1320; sequence DVDECEVGGHNCDSHASCLNIPGSFSCRCLPGWVGDGFECH. The 41-residue stretch at 1321 to 1361 folds into the EGF-like 20; calcium-binding domain; sequence DLDECVSQEHRCSPRGDCLNVPGSYRCTCRQGFAGDGFFCE. The EGF-like 21; calcium-binding domain maps to 1362-1403; that stretch reads DRDECAENVDLCDNGQCLNAPGGYRCECEMGFDPTEDHRACQ. Residues 1404–1444 form the EGF-like 22; calcium-binding domain; the sequence is DVDECAQGNLCAFGSCENLPGMFRCICNGGYELDRGGGNCT. N-linked (GlcNAc...) asparagine glycosylation is present at Asn1442. The EGF-like 23; calcium-binding domain occupies 1445 to 1485; it reads DINECADPVNCINGVCINTPGSYLCSCPQDFELNPSGVGCV. Residues 1490–1546 form the TB 6 domain; the sequence is GNCFLETHDRGDSGISCSAEIGVGVTRASCCCSLGRAWGNPCELCPMANTTEYRTLC. Asn1538 is a glycosylation site (N-linked (GlcNAc...) asparagine). One can recognise an EGF-like 24; calcium-binding domain in the interval 1563–1604; it reads DIDECQELPGLCQGGDCVNTFGSFQCECPPGYHLSEHTRICE. 6 cysteine pairs are disulfide-bonded: Cys1567–Cys1579, Cys1574–Cys1588, Cys1590–Cys1603, Cys1609–Cys1621, Cys1616–Cys1630, and Cys1632–Cys1645. One can recognise an EGF-like 25; calcium-binding domain in the interval 1605 to 1646; that stretch reads DIDECSTHSGICGPGTCYNTLGNYTCVCPAEYLQVNGGNNCM. A glycan (N-linked (GlcNAc...) asparagine) is linked at Asn1627. Residues 1651 to 1703 enclose the TB 7 domain; sequence SVCFRHYNGTCQNELAFNVTRKMCCCSYNIGQAWNRPCEACPTPISPDYQILC. Asn1658 and Asn1668 each carry an N-linked (GlcNAc...) asparagine glycan. The EGF-like 26; calcium-binding domain maps to 1721–1762; sequence DIDECGEIPAICANGICINQIGSFRCECPAGFNYNSILLACE. Disulfide bonds link Cys1725–Cys1737, Cys1732–Cys1746, Cys1748–Cys1761, Cys1767–Cys1780, Cys1774–Cys1789, Cys1791–Cys1803, Cys1809–Cys1821, Cys1816–Cys1830, Cys1832–Cys1845, Cys1851–Cys1861, Cys1856–Cys1870, Cys1872–Cys1884, Cys1890–Cys1903, Cys1898–Cys1912, Cys1914–Cys1927, Cys1933–Cys1945, Cys1940–Cys1954, Cys1956–Cys1967, Cys1973–Cys1985, Cys1980–Cys1994, and Cys1996–Cys2009. The 42-residue stretch at 1763–1804 folds into the EGF-like 27; calcium-binding domain; it reads DVDECGSRESPCQQNADCINIPGSYRCKCTRGYKLSPGGACV. Residues 1805–1846 enclose the EGF-like 28 domain; sequence GRNECREIPNVCSHGDCMDTEGSYMCLCHRGFQASADQTLCM. Residues 1847 to 1885 enclose the EGF-like 29; calcium-binding domain; that stretch reads DIDECDRQPCGNGTCKNIIGSYNCLCFPGFVVTHNGDCV. N-linked (GlcNAc...) asparagine glycosylation is present at Asn1858. The 43-residue stretch at 1886–1928 folds into the EGF-like 30; calcium-binding domain; it reads DFDECTTLVGQVCRFGHCLNTAGSFHCLCQDGFELTADGKNCV. One can recognise an EGF-like 31; calcium-binding domain in the interval 1929–1968; sequence DTNECLSLAGTCLPGTCQNLEGSFRCICPPGFQVQSDHCI. Residues 1969-2010 enclose the EGF-like 32; calcium-binding domain; that stretch reads DIDECSEEPNLCLFGTCTNSPGSFQCLCPPGFVLSDNGHRCF. In terms of domain architecture, TB 8 spans 2015 to 2068; it reads SFCFTRFEAGKCSVPKAFNTTKTRCCCSKRPGEGWGDPCELCPQEGSAAFQELC. The N-linked (GlcNAc...) asparagine glycan is linked to Asn2033. In terms of domain architecture, EGF-like 33; calcium-binding spans 2084–2125; that stretch reads DVNECAENPGVCTNGVCVNTDGSFRCECPFGYSLDFTGINCV. 15 cysteine pairs are disulfide-bonded: Cys2088–Cys2100, Cys2095–Cys2109, Cys2111–Cys2124, Cys2130–Cys2141, Cys2136–Cys2150, Cys2152–Cys2164, Cys2170–Cys2181, Cys2177–Cys2190, Cys2192–Cys2205, Cys2211–Cys2225, Cys2218–Cys2234, Cys2236–Cys2250, Cys2256–Cys2268, Cys2263–Cys2277, and Cys2279–Cys2292. One can recognise an EGF-like 34; calcium-binding domain in the interval 2126-2165; it reads DTDECSVGHPCGQGTCTNVIGGFECACADGFEPGLMMTCE. An EGF-like 35; calcium-binding domain is found at 2166–2206; sequence DIDECSLNPLLCAFRCHNTEGSYLCTCPAGYTLREDGAMCR. The region spanning 2207–2251 is the EGF-like 36; calcium-binding domain; that stretch reads DVDECADGQQDCHARGMECKNLIGTFACVCPPGMRPLPGSGEGCT. An EGF-like 37; calcium-binding domain is found at 2252–2293; that stretch reads DDNECHAQPDLCVNGRCVNTAGSFRCDCDEGFQPSPTLTECH. In terms of domain architecture, TB 9 spans 2298–2351; it reads GPCFAEVLQTMCRSLSSSSEAVTRAECCCGGGRGWGPRCELCPLPGTSAYRKLC. Positions 2363–2404 constitute an EGF-like 38; calcium-binding domain; it reads DVDECRMLAHLCAHGECINSLGSFRCHCQAGYTPDATATTCL. 21 disulfide bridges follow: Cys2367-Cys2379, Cys2374-Cys2388, Cys2390-Cys2403, Cys2409-Cys2420, Cys2416-Cys2429, Cys2431-Cys2444, Cys2450-Cys2461, Cys2457-Cys2470, Cys2472-Cys2483, Cys2489-Cys2502, Cys2496-Cys2511, Cys2513-Cys2526, Cys2532-Cys2542, Cys2538-Cys2551, Cys2553-Cys2566, Cys2572-Cys2584, Cys2579-Cys2593, Cys2595-Cys2608, Cys2614-Cys2625, Cys2621-Cys2634, and Cys2636-Cys2648. The EGF-like 39; calcium-binding domain maps to 2405-2445; that stretch reads DMDECSQVPKPCTFLCKNTKGSFLCSCPRGYLLEEDGRTCK. The EGF-like 40; calcium-binding domain occupies 2446–2484; it reads DLDECTSRQHNCQFLCVNTVGAFTCRCPPGFTQHHQACF. Positions 2485 to 2527 constitute an EGF-like 41; calcium-binding domain; that stretch reads DNDECSAQPGPCGAHGHCHNTPGSFRCECHQGFTLVSSGHGCE. One can recognise an EGF-like 42; calcium-binding domain in the interval 2528 to 2567; the sequence is DVNECDGPHRCQHGCQNQLGGYRCSCPQGFTQHSQWAQCV. One can recognise an EGF-like 43; calcium-binding domain in the interval 2568-2609; the sequence is DENECALSPPTCGSASCRNTLGGFRCVCPSGFDFDQALGGCQ. The region spanning 2610-2649 is the EGF-like 44; calcium-binding domain; the sequence is EVDECAGRRGPCSYSCANTPGGFLCGCPQGYFRAGQGHCV. Residue Asn2713 is glycosylated (N-linked (GlcNAc...) asparagine).

It belongs to the fibrillin family. In terms of processing, probably forms intermolecular disulfide bonds either with other FBN3 molecules or with other components of the microfibrils. As to expression, predominantly expressed in connective tissues such as skeletal muscle, tendon, skin, perichondrium and periosteum. Highly expressed in fetal lung, brain, kidney. Expressed at low level in prostate, testis, mammary gland, uterus, ovary, placenta, bladder, adrenal gland, thyroid, fetal thymus, fetal liver, liver, fetal heart and heart.

The protein resides in the secreted. It localises to the extracellular space. Its subcellular location is the extracellular matrix. Fibrillins are structural components of 10-12 nm extracellular calcium-binding microfibrils, which occur either in association with elastin or in elastin-free bundles. Fibrillin-containing microfibrils provide long-term force bearing structural support. The chain is Fibrillin-3 (FBN3) from Homo sapiens (Human).